Here is a 973-residue protein sequence, read N- to C-terminus: Piwi-like protein 2 (973 aa).

Residues 28–65 (WPQASKPLDPALGRGAPAGRGHVFGKPEEPSTQRGPAQ) form a disordered region. Low complexity predominate over residues 34–48 (PLDPALGRGAPAGRG). Arg-47 is modified (symmetric dimethylarginine). 2 positions are modified to omega-N-methylarginine; by PRMT5; alternate: Arg-76 and Arg-97. A Symmetric dimethylarginine; by PRMT5; alternate modification is found at Arg-76. Symmetric dimethylarginine; alternate is present on Arg-97. Arg-102 is modified (symmetric dimethylarginine; by PRMT5; alternate). Arg-102 carries the post-translational modification Omega-N-methylarginine; alternate. 2 positions are modified to symmetric dimethylarginine: Arg-146 and Arg-158. Residues 162–199 (GISREVDKPPCTFSTPSRGPPQLSSPPALPQSPLHSPD) form a disordered region. Arg-165 bears the Symmetric dimethylarginine; by PRMT5 mark. Residues 389 to 502 (CVLDVMHAIY…LLPELSFMTG (114 aa)) form the PAZ domain. Symmetric dimethylarginine; by PRMT5 is present on Arg-551. The 292-residue stretch at 668 to 959 (MVVCIIMGPR…LAFLSGHILH (292 aa)) folds into the Piwi domain. Catalysis depends on residues Asp-745, Glu-783, Asp-815, and His-948.

This sequence belongs to the argonaute family. Piwi subfamily. In terms of assembly, interacts with DDX4, MAEL, EIF3A, EIF4E, EIF4G, PRMT5 and WDR77. Associates with EIF4E- and EIF4G-containing m7G cap-binding complexes. Interacts (when methylated on arginine residues) with TDRD1 and TDRKH/TDRD2. Interacts with TDRD12. Component of the PET complex, at least composed of EXD1, PIWIL2, TDRD12 and piRNAs. Interacts with MOV10L1. Interacts with GPAT2. Interacts with TEX19. Interacts with GSK3B. Interacts (via PIWI domain) with BMAL1 and CLOCK. Interacts with TEX15. Mg(2+) is required as a cofactor. Post-translationally, arginine methylation by PRMT5 is required for the interaction with Tudor domain-containing protein TDRD1 and subsequent localization to the meiotic nuage, also named P granule. Expressed in adult testis and in most tumors.

The protein localises to the cytoplasm. Its function is as follows. Endoribonuclease that plays a central role during spermatogenesis by repressing transposable elements and preventing their mobilization, which is essential for the germline integrity. Plays an essential role in meiotic differentiation of spermatocytes, germ cell differentiation and in self-renewal of spermatogonial stem cells. Acts via the piRNA metabolic process, which mediates the repression of transposable elements during meiosis by forming complexes composed of piRNAs and Piwi proteins and govern the methylation and subsequent repression of transposons. During piRNA biosynthesis, plays a key role in the piRNA amplification loop, also named ping-pong amplification cycle, by acting as a 'slicer-competent' piRNA endoribonuclease that cleaves primary piRNAs, which are then loaded onto 'slicer-incompetent' PIWIL4. PIWIL2 slicing produces a pre-miRNA intermediate, which is then processed in mature piRNAs, and as well as a 16 nucleotide by-product that is degraded. Required for PIWIL4/MIWI2 nuclear localization and association with secondary piRNAs antisense. Besides their function in transposable elements repression, piRNAs are probably involved in other processes during meiosis such as translation regulation. Indirectly modulates expression of genes such as PDGFRB, SLC2A1, ITGA6, GJA7, THY1, CD9 and STRA8. When overexpressed, acts as an oncogene by inhibition of apoptosis and promotion of proliferation in tumors. Represses circadian rhythms by promoting the stability and activity of core clock components BMAL1 and CLOCK by inhibiting GSK3B-mediated phosphorylation and ubiquitination-dependent degradation of these proteins. In Homo sapiens (Human), this protein is Piwi-like protein 2 (PIWIL2).